The following is a 467-amino-acid chain: Siroheme synthase (467 aa).

Residues 1–203 (METLPIFMKL…GQEEAARHAM (203 aa)) are precorrin-2 dehydrogenase /sirohydrochlorin ferrochelatase. NAD(+)-binding positions include 22 to 23 (EI) and 43 to 44 (PE). Ser-128 carries the phosphoserine modification. The segment at 216–467 (GEVYLVGGGP…APSPEVVSAG (252 aa)) is uroporphyrinogen-III C-methyltransferase. Pro-225 contributes to the S-adenosyl-L-methionine binding site. Residue Asp-248 is the Proton acceptor of the active site. Lys-270 serves as the catalytic Proton donor. Residues 301-303 (GGD), Ile-306, 331-332 (TA), Met-383, and Gly-412 each bind S-adenosyl-L-methionine.

This sequence in the N-terminal section; belongs to the precorrin-2 dehydrogenase / sirohydrochlorin ferrochelatase family. In the C-terminal section; belongs to the precorrin methyltransferase family.

It catalyses the reaction uroporphyrinogen III + 2 S-adenosyl-L-methionine = precorrin-2 + 2 S-adenosyl-L-homocysteine + H(+). The catalysed reaction is precorrin-2 + NAD(+) = sirohydrochlorin + NADH + 2 H(+). It carries out the reaction siroheme + 2 H(+) = sirohydrochlorin + Fe(2+). The protein operates within cofactor biosynthesis; adenosylcobalamin biosynthesis; precorrin-2 from uroporphyrinogen III: step 1/1. It functions in the pathway cofactor biosynthesis; adenosylcobalamin biosynthesis; sirohydrochlorin from precorrin-2: step 1/1. Its pathway is porphyrin-containing compound metabolism; siroheme biosynthesis; precorrin-2 from uroporphyrinogen III: step 1/1. It participates in porphyrin-containing compound metabolism; siroheme biosynthesis; siroheme from sirohydrochlorin: step 1/1. The protein operates within porphyrin-containing compound metabolism; siroheme biosynthesis; sirohydrochlorin from precorrin-2: step 1/1. Its function is as follows. Multifunctional enzyme that catalyzes the SAM-dependent methylations of uroporphyrinogen III at position C-2 and C-7 to form precorrin-2 via precorrin-1. Then it catalyzes the NAD-dependent ring dehydrogenation of precorrin-2 to yield sirohydrochlorin. Finally, it catalyzes the ferrochelation of sirohydrochlorin to yield siroheme. The protein is Siroheme synthase of Methylobacillus flagellatus (strain ATCC 51484 / DSM 6875 / VKM B-1610 / KT).